The primary structure comprises 300 residues: Diphthine methyl ester synthase (300 aa).

Residues Leu-9, Asp-85, Gly-88, Ser-113–Val-114, Leu-164, Leu-222, and His-247 contribute to the S-adenosyl-L-methionine site.

It belongs to the diphthine synthase family.

Its subcellular location is the cytoplasm. The catalysed reaction is 2-[(3S)-amino-3-carboxypropyl]-L-histidyl-[translation elongation factor 2] + 4 S-adenosyl-L-methionine = diphthine methyl ester-[translation elongation factor 2] + 4 S-adenosyl-L-homocysteine + 3 H(+). It participates in protein modification; peptidyl-diphthamide biosynthesis. Its function is as follows. S-adenosyl-L-methionine-dependent methyltransferase that catalyzes four methylations of the modified target histidine residue in translation elongation factor 2 (EF-2), to form an intermediate called diphthine methyl ester. The four successive methylation reactions represent the second step of diphthamide biosynthesis. This Yarrowia lipolytica (strain CLIB 122 / E 150) (Yeast) protein is Diphthine methyl ester synthase (DPH5).